The chain runs to 75 residues: Conotoxin Leo-O3 (75 aa).

The first 22 residues, 1 to 22, serve as a signal peptide directing secretion; that stretch reads MKLTCVVIVAVLFLTACQLATA. The propeptide occupies 23–42; it reads DISGGMRKHRALRSTTKLSR. 3 disulfide bridges follow: C47-C60, C54-C63, and C59-C69. Cysteine amide is present on C69. A propeptide spanning residues 70-75 is cleaved from the precursor; the sequence is GSGLHV.

Belongs to the conotoxin O1 superfamily. In terms of tissue distribution, expressed by the venom duct.

Its subcellular location is the secreted. In Conus leopardus (Leopard cone), this protein is Conotoxin Leo-O3.